The following is a 207-amino-acid chain: Probable isochorismatase (207 aa).

Belongs to the isochorismatase family.

It carries out the reaction isochorismate + H2O = (2S,3S)-2,3-dihydroxy-2,3-dihydrobenzoate + pyruvate. It participates in antibiotic biosynthesis; phenazine biosynthesis. Its function is as follows. Involved in the biosynthesis of the antibiotic phenazine, a nitrogen-containing heterocyclic molecule having important roles in virulence, competition and biological control. This isochorismatase may remove pyruvate from chorismate during the formation of the phenazine ring structure and/or stabilize the phenazine biosynthetic complex. The sequence is that of Probable isochorismatase (phzA) from Pseudomonas chlororaphis (Pseudomonas aureofaciens).